Here is a 691-residue protein sequence, read N- to C-terminus: ERI1 exoribonuclease 2 (691 aa).

Residues 37–226 form the Exonuclease domain; that stretch reads LIVIDFESTC…DDSRNTALLA (190 aa). Mg(2+)-binding residues include Asp-41, Glu-43, and Asp-156. Glu-43 acts as the Proton acceptor in catalysis. Residue Glu-43 participates in AMP binding. The active-site Proton acceptor is His-213. His-213 is an AMP binding site. Mg(2+) is bound at residue Asp-218. Zn(2+) contacts are provided by Cys-597, Cys-599, Cys-622, and Cys-634. A GRF-type zinc finger spans residues 597–643; the sequence is CKCGRRSKRLVVSNNGPNHGKVFYCCPIGKYQENRKCCGYFKWEQTL.

It belongs to the ERI2 family. The cofactor is Mg(2+).

In Homo sapiens (Human), this protein is ERI1 exoribonuclease 2 (ERI2).